A 555-amino-acid polypeptide reads, in one-letter code: Heterochromatin protein 1-binding protein 3 (555 aa).

Ala2 bears the N-acetylalanine mark. Ser6 carries the phosphoserine modification. Positions 29 to 134 (KLGEKVEDNT…KEKKVKKTIP (106 aa)) are disordered. Thr51 carries the phosphothreonine modification. A compositionally biased stretch (basic and acidic residues) spans 51–67 (TPPKSKLAEGVEEKPEP). Residue Lys64 forms a Glycyl lysine isopeptide (Lys-Gly) (interchain with G-Cter in SUMO2) linkage. Thr85 bears the Phosphothreonine mark. Lys97 is covalently cross-linked (Glycyl lysine isopeptide (Lys-Gly) (interchain with G-Cter in SUMO2)). Residues 100 to 127 (PENEEKEENKPSEETKKDEKDQSKEKEK) are compositionally biased toward basic and acidic residues. Phosphoserine occurs at positions 142, 155, and 156. The region spanning 157–232 (PRPKMDAILT…GASGSFVVVQ (76 aa)) is the H15 1 domain. N6-acetyllysine is present on Lys190. Residues 227–254 (SFVVVQKSRKPPQKSRNRKNRSSAVDPE) are disordered. Residues 233 to 247 (KSRKPPQKSRNRKNR) show a composition bias toward basic residues. Ser248 and Ser249 each carry phosphoserine. 2 consecutive H15 domains span residues 255–330 (PQVK…QLKK) and 337–413 (LGGS…QLCF). Residue Lys258 forms a Glycyl lysine isopeptide (Lys-Gly) (interchain with G-Cter in SUMO2) linkage. The tract at residues 422 to 555 (LFPKKEPDDS…TMKKSFKAKK (134 aa)) is disordered. Residues 430–452 (DSKDEDEDEDEDDSSEEDSEDEE) show a composition bias toward acidic residues. Residues Ser443, Ser444, and Ser448 each carry the phosphoserine modification. Over residues 491–512 (GKTRPLPKKAPPKAKSPAKKAR) the composition is skewed to basic residues. Over residues 513–532 (PSPSVIKKPSGSSSKKPAAS) the composition is skewed to low complexity. Positions 545–555 (STMKKSFKAKK) are enriched in basic residues.

As to quaternary structure, interacts (via PxVxL motif) with CBX5.

The protein localises to the nucleus. Its subcellular location is the chromosome. Its function is as follows. Component of heterochromatin that maintains heterochromatin integrity during G1/S progression and regulates the duration of G1 phase to critically influence cell proliferative capacity. May play a role in hypoxia-induced oncogenesis. The polypeptide is Heterochromatin protein 1-binding protein 3 (HP1BP3) (Bos taurus (Bovine)).